The primary structure comprises 162 residues: Cytochrome c-type biogenesis protein CcmE (162 aa).

The Cytoplasmic portion of the chain corresponds to 1–8 (MNPVRKKR). The chain crosses the membrane as a helical; Signal-anchor for type II membrane protein span at residues 9 to 29 (LIIVLAILVGVGAAVGLALSA). The Periplasmic segment spans residues 30 to 162 (LQQNINLFYT…GETSYNQEGK (133 aa)). 2 residues coordinate heme: His124 and Tyr128. Basic and acidic residues predominate over residues 139–148 (DSGQLKHYEN). Residues 139-162 (DSGQLKHYENGKAAGETSYNQEGK) form a disordered region.

The protein belongs to the CcmE/CycJ family.

It is found in the cell inner membrane. In terms of biological role, heme chaperone required for the biogenesis of c-type cytochromes. Transiently binds heme delivered by CcmC and transfers the heme to apo-cytochromes in a process facilitated by CcmF and CcmH. The sequence is that of Cytochrome c-type biogenesis protein CcmE from Pseudomonas paraeruginosa (strain DSM 24068 / PA7) (Pseudomonas aeruginosa (strain PA7)).